The chain runs to 555 residues: Glucose-6-phosphate isomerase (555 aa).

Residues 169 to 170, 219 to 224, glutamine 364, glutamate 368, histidine 399, and lysine 521 each bind D-glucose 6-phosphate; these read GS and SKTFTT. Glutamate 368 serves as the catalytic Proton donor. Residues histidine 399 and lysine 521 contribute to the active site.

Belongs to the GPI family. As to quaternary structure, homodimer.

The protein resides in the cytoplasm. Its subcellular location is the cytosol. It catalyses the reaction alpha-D-glucose 6-phosphate = beta-D-fructose 6-phosphate. Its pathway is carbohydrate degradation; glycolysis; D-glyceraldehyde 3-phosphate and glycerone phosphate from D-glucose: step 2/4. In terms of biological role, in the cytoplasm, catalyzes the conversion of glucose-6-phosphate to fructose-6-phosphate, the second step in glycolysis, and the reverse reaction during gluconeogenesis. The polypeptide is Glucose-6-phosphate isomerase (PGI1) (Eremothecium gossypii (strain ATCC 10895 / CBS 109.51 / FGSC 9923 / NRRL Y-1056) (Yeast)).